Consider the following 262-residue polypeptide: Phosphatidylserine decarboxylase proenzyme (262 aa).

Catalysis depends on charge relay system; for autoendoproteolytic cleavage activity residues aspartate 86, histidine 142, and serine 226. Serine 226 serves as the catalytic Schiff-base intermediate with substrate; via pyruvic acid; for decarboxylase activity. Serine 226 is subject to Pyruvic acid (Ser); by autocatalysis.

This sequence belongs to the phosphatidylserine decarboxylase family. PSD-B subfamily. Prokaryotic type I sub-subfamily. Heterodimer of a large membrane-associated beta subunit and a small pyruvoyl-containing alpha subunit. Requires pyruvate as cofactor. Post-translationally, is synthesized initially as an inactive proenzyme. Formation of the active enzyme involves a self-maturation process in which the active site pyruvoyl group is generated from an internal serine residue via an autocatalytic post-translational modification. Two non-identical subunits are generated from the proenzyme in this reaction, and the pyruvate is formed at the N-terminus of the alpha chain, which is derived from the carboxyl end of the proenzyme. The autoendoproteolytic cleavage occurs by a canonical serine protease mechanism, in which the side chain hydroxyl group of the serine supplies its oxygen atom to form the C-terminus of the beta chain, while the remainder of the serine residue undergoes an oxidative deamination to produce ammonia and the pyruvoyl prosthetic group on the alpha chain. During this reaction, the Ser that is part of the protease active site of the proenzyme becomes the pyruvoyl prosthetic group, which constitutes an essential element of the active site of the mature decarboxylase.

Its subcellular location is the cell membrane. The enzyme catalyses a 1,2-diacyl-sn-glycero-3-phospho-L-serine + H(+) = a 1,2-diacyl-sn-glycero-3-phosphoethanolamine + CO2. It functions in the pathway phospholipid metabolism; phosphatidylethanolamine biosynthesis; phosphatidylethanolamine from CDP-diacylglycerol: step 2/2. Functionally, catalyzes the formation of phosphatidylethanolamine (PtdEtn) from phosphatidylserine (PtdSer). This is Phosphatidylserine decarboxylase proenzyme from Bacillus thuringiensis subsp. konkukian (strain 97-27).